The sequence spans 216 residues: MPQARGEGATPPTSLPNPSLKGVPLPDNPNNLEPLTREWLAAIGEDPDREGLQRTPQRVAKAWAYMTEGYGQTLAQVVGEGVFAAEGSEMVIVKDIEFYSMCEHHMLPFYGRAHVAYIPGTRILGLSKFARIVDLYSRRLQVQERITTQVADAVEELLAPKGVAVLMEGIHLCMAMRGVQKQNSSTTTSAMRGLFRSDPRTRAEFMSAVQGTLRGR.

Positions 1-33 (MPQARGEGATPPTSLPNPSLKGVPLPDNPNNLE) are disordered. Low complexity predominate over residues 24–33 (PLPDNPNNLE). Zn(2+)-binding residues include cysteine 102, histidine 105, and cysteine 173.

It belongs to the GTP cyclohydrolase I family. Toroid-shaped homodecamer, composed of two pentamers of five dimers.

It carries out the reaction GTP + H2O = 7,8-dihydroneopterin 3'-triphosphate + formate + H(+). It functions in the pathway cofactor biosynthesis; 7,8-dihydroneopterin triphosphate biosynthesis; 7,8-dihydroneopterin triphosphate from GTP: step 1/1. The protein is GTP cyclohydrolase 1 (folE) of Deinococcus radiodurans (strain ATCC 13939 / DSM 20539 / JCM 16871 / CCUG 27074 / LMG 4051 / NBRC 15346 / NCIMB 9279 / VKM B-1422 / R1).